A 118-amino-acid chain; its full sequence is C-type natriuretic peptide 2 (118 aa).

The N-terminal stretch at 1–22 (MHFCHIVGWGLVLAVLYLRTEA) is a signal peptide. A propeptide spanning residues 23 to 96 (KPVAQAHQKS…SRKIKGINKK (74 aa)) is cleaved from the precursor. A disulfide bridge connects residues Cys102 and Cys118.

The protein belongs to the natriuretic peptide family.

Its subcellular location is the secreted. Exhibits natriuretic and vasodepressor activity. Has a cGMP-stimulating activity. The polypeptide is C-type natriuretic peptide 2 (Aquarana catesbeiana (American bullfrog)).